A 314-amino-acid chain; its full sequence is Olfactory receptor 5F1 (314 aa).

Residues 1–25 (MTRKNYTSLTEFVLLGLADTLELQI) lie on the Extracellular side of the membrane. Asparagine 5 carries N-linked (GlcNAc...) asparagine glycosylation. The chain crosses the membrane as a helical span at residues 26–46 (ILFLFFLVIYTLTVLGNLGMI). Over 47–54 (LLIRIDSQ) the chain is Cytoplasmic. The chain crosses the membrane as a helical span at residues 55-75 (LHTPMYFFLANLSFVDVCNST). Residues 76–99 (TITPKMLADLLSEKKTISFAGCFL) are Extracellular-facing. An intrachain disulfide couples cysteine 97 to cysteine 189. The chain crosses the membrane as a helical span at residues 100-120 (QMYFFISLATTECILFGLMAY). Residues 121-139 (DRYAAICRPLLYSLIMSRT) are Cytoplasmic-facing. A helical transmembrane segment spans residues 140 to 160 (VYLKMAAGAFAAGLLNFMVNT). The Extracellular portion of the chain corresponds to 161-196 (SHVSSLSFCDSNVIHHFFCDSPPLFKLSCSDTILKE). Residues 197–217 (SISSILAGVNIVGTLLVILSS) form a helical membrane-spanning segment. Topologically, residues 218–237 (YSYVLFSIFSMHSGEGRHRA) are cytoplasmic. A helical membrane pass occupies residues 238 to 258 (FSTCASHLTAIILFYATCIYT). The Extracellular portion of the chain corresponds to 259-271 (YLRPSSSYSLNQD). A helical transmembrane segment spans residues 272 to 292 (KVASVFYTVVIPMLNPLIYSL). Residues 293-314 (RSKEVKKALANVISRKRTSSFL) are Cytoplasmic-facing.

Belongs to the G-protein coupled receptor 1 family.

It localises to the cell membrane. Odorant receptor. The sequence is that of Olfactory receptor 5F1 (OR5F1) from Homo sapiens (Human).